A 321-amino-acid polypeptide reads, in one-letter code: Small ribosomal subunit protein mS43 (321 aa).

The N-terminal 13 residues, 1 to 13, are a transit peptide targeting the mitochondrion; that stretch reads MLRFTGARAIRKY.

Belongs to the mitochondrion-specific ribosomal protein mS43 family. In terms of assembly, component of the mitochondrial small ribosomal subunit (mt-SSU). Mature yeast 74S mitochondrial ribosomes consist of a small (37S) and a large (54S) subunit. The 37S small subunit contains a 15S ribosomal RNA (15S mt-rRNA) and 34 different proteins. The 54S large subunit contains a 21S rRNA (21S mt-rRNA) and 46 different proteins. mS43 forms a heterodimer with mS42, building a large protuberance adjacent to the mRNA channel exit in the mt-SSU body.

Its subcellular location is the mitochondrion. Component of the mitochondrial ribosome (mitoribosome), a dedicated translation machinery responsible for the synthesis of mitochondrial genome-encoded proteins, including at least some of the essential transmembrane subunits of the mitochondrial respiratory chain. The mitoribosomes are attached to the mitochondrial inner membrane and translation products are cotranslationally integrated into the membrane. The polypeptide is Small ribosomal subunit protein mS43 (MRP1) (Saccharomyces cerevisiae (strain ATCC 204508 / S288c) (Baker's yeast)).